A 51-amino-acid polypeptide reads, in one-letter code: uncharacterized protein (51 aa).

The tract at residues 1–51 (MKRKAEVNEAIKNNNTPTESMDPNSYKTQYHDDPNFRGANRNSKQGQQGGM) is disordered. Polar residues-rich tracts occupy residues 11 to 28 (IKNNNTPTESMDPNSYKT) and 40 to 51 (NRNSKQGQQGGM).

This is an uncharacterized protein from Bacillus subtilis (strain 168).